The sequence spans 240 residues: RNA-binding protein pno1 (240 aa).

Positions 1–15 (MEAENIRADAFEPAK) are enriched in basic and acidic residues. The segment at 1-61 (MEAENIRADA…APPKAKRARS (61 aa)) is disordered. One can recognise a KH domain in the interval 164–213 (QSRAIGRLAGKGGRTKFTIENVTKTRIVLADSKIHILGSYQNIQLARRAV).

The protein belongs to the PNO1 family.

The protein resides in the nucleus. It is found in the nucleolus. The protein is RNA-binding protein pno1 (l(1)G0004) of Drosophila melanogaster (Fruit fly).